We begin with the raw amino-acid sequence, 726 residues long: Ribonuclease R (726 aa).

Residues 264 to 592 (RKDLTELAFV…TVHRLLWMNL (329 aa)) form the RNB domain. The S1 motif domain maps to 645–726 (GQTFHGFISA…VQKRAILTLV (82 aa)).

Belongs to the RNR ribonuclease family. RNase R subfamily.

The protein localises to the cytoplasm. The catalysed reaction is Exonucleolytic cleavage in the 3'- to 5'-direction to yield nucleoside 5'-phosphates.. Functionally, 3'-5' exoribonuclease that releases 5'-nucleoside monophosphates and is involved in maturation of structured RNAs. This Mycoplasma pneumoniae (strain ATCC 29342 / M129 / Subtype 1) (Mycoplasmoides pneumoniae) protein is Ribonuclease R.